Here is a 346-residue protein sequence, read N- to C-terminus: Tripartite motif-containing protein 44 (346 aa).

A disordered region spans residues Thr68 to Pro167. The span at Glu89–Pro167 shows a compositional bias: acidic residues. The segment at Val176–Leu217 adopts a B box-type zinc-finger fold. Cys181, His184, Cys203, and His209 together coordinate Zn(2+). A coiled-coil region spans residues Ala292 to Glu327. Residues Ala313–Thr346 form a disordered region. The segment covering Gly332–Thr346 has biased composition (acidic residues). Phosphoserine is present on residues Ser338 and Ser341.

As to quaternary structure, interacts (via coiled coil) with TRIM17 (via coiled coil). Expressed mainly in brain with high level in cerebral hemispheres and cerebellum. Lower expression in kidney, lung and spleen. In brain is detected in the hippocampus, thalamic and pretectal nuclei, substantia nigra, the dorsal part of the medulla, the cerebellum, in the olfactory nucleus, other cortical areas apart from hippocampus and the striatum. Indeed expression is confined in neuronal somata namely in the CA3 region and dentate gyrus of the hippocampus, caudate-putamen, parabranchial nucleus, olfactory nucleus, cortex, deep cerebellar nuclei and thalamus. Also highly expressed in the spleen. thymus and testis.

In terms of biological role, may play a role in the process of differentiation and maturation of neuronal cells. May regulate the activity of TRIM17. Is a negative regulator of PAX6 expression. The sequence is that of Tripartite motif-containing protein 44 (Trim44) from Mus musculus (Mouse).